A 189-amino-acid chain; its full sequence is Ras-like protein rasC (189 aa).

Residue 11–18 (GDGGVGKS) participates in GTP binding. The Effector region motif lies at 33–41 (YDPTIENSY). GTP contacts are provided by residues 58 to 62 (DTAGQ) and 117 to 120 (NKAD). Cys-186 is subject to Cysteine methyl ester. Cys-186 carries S-geranylgeranyl cysteine lipidation. Residues 187 to 189 (IIL) constitute a propeptide, removed in mature form.

Belongs to the small GTPase superfamily. Ras family.

It localises to the cell membrane. It carries out the reaction GTP + H2O = GDP + phosphate + H(+). With respect to regulation, alternates between an inactive form bound to GDP and an active form bound to GTP. Activated by a guanine nucleotide-exchange factor (GEF) and inactivated by a GTPase-activating protein (GAP). Functionally, ras proteins bind GDP/GTP and possess intrinsic GTPase activity. The sequence is that of Ras-like protein rasC (rasC) from Dictyostelium discoideum (Social amoeba).